A 233-amino-acid polypeptide reads, in one-letter code: Lipoprotein-releasing system ATP-binding protein LolD (233 aa).

An ABC transporter domain is found at 7-233; sequence IHCEKLSKTY…QLQSESERNH (227 aa). Residue 43-50 coordinates ATP; that stretch reads GASGAGKS.

It belongs to the ABC transporter superfamily. Lipoprotein translocase (TC 3.A.1.125) family. In terms of assembly, the complex is composed of two ATP-binding proteins (LolD) and two transmembrane proteins (LolC and LolE).

The protein localises to the cell inner membrane. Part of the ABC transporter complex LolCDE involved in the translocation of mature outer membrane-directed lipoproteins, from the inner membrane to the periplasmic chaperone, LolA. Responsible for the formation of the LolA-lipoprotein complex in an ATP-dependent manner. This Coxiella burnetii (strain RSA 493 / Nine Mile phase I) protein is Lipoprotein-releasing system ATP-binding protein LolD.